Here is a 475-residue protein sequence, read N- to C-terminus: Tryptophan synthase beta chain 2, chloroplastic (475 aa).

The span at 1-21 (MATASTAATFRPSSVSASSEL) shows a compositional bias: polar residues. The interval 1 to 44 (MATASTAATFRPSSVSASSELTHLRSPSKLPKFTPLPSARSRSS) is disordered. Residues 1–51 (MATASTAATFRPSSVSASSELTHLRSPSKLPKFTPLPSARSRSSSSFSVSC) constitute a chloroplast transit peptide. Threonine 52 bears the N-acetylthreonine mark. Position 170 is an N6-(pyridoxal phosphate)lysine (lysine 170).

This sequence belongs to the TrpB family. As to quaternary structure, tetramer of two alpha and two beta chains. Pyridoxal 5'-phosphate serves as cofactor.

The protein localises to the plastid. The protein resides in the chloroplast. It carries out the reaction (1S,2R)-1-C-(indol-3-yl)glycerol 3-phosphate + L-serine = D-glyceraldehyde 3-phosphate + L-tryptophan + H2O. The protein operates within amino-acid biosynthesis; L-tryptophan biosynthesis; L-tryptophan from chorismate: step 5/5. Its function is as follows. The beta subunit is responsible for the synthesis of L-tryptophan from indole and L-serine. In Arabidopsis thaliana (Mouse-ear cress), this protein is Tryptophan synthase beta chain 2, chloroplastic (TSB2).